A 342-amino-acid chain; its full sequence is Phosphate acyltransferase (342 aa).

It belongs to the PlsX family. In terms of assembly, homodimer. Probably interacts with PlsY.

It localises to the cytoplasm. The catalysed reaction is a fatty acyl-[ACP] + phosphate = an acyl phosphate + holo-[ACP]. The protein operates within lipid metabolism; phospholipid metabolism. Catalyzes the reversible formation of acyl-phosphate (acyl-PO(4)) from acyl-[acyl-carrier-protein] (acyl-ACP). This enzyme utilizes acyl-ACP as fatty acyl donor, but not acyl-CoA. The polypeptide is Phosphate acyltransferase (Legionella pneumophila (strain Paris)).